A 362-amino-acid chain; its full sequence is Homeobox protein Nkx-2.3 (362 aa).

2 disordered regions span residues 126-149 (EAAG…RKPR) and 203-222 (QRQD…PPRR). Residues 132 to 141 (KTSEDGERPK) are compositionally biased toward basic and acidic residues. The segment at residues 145-204 (RRKPRVLFSQAQVFELERRFKQQRYLSAPEREHLASSLKLTSTQVKIWFQNRRYKCKRQR) is a DNA-binding region (homeobox).

Belongs to the NK-2 homeobox family. In terms of tissue distribution, expressed in spleen and intestine. Also expressed in salivary gland and tongue.

The protein localises to the nucleus. Functionally, transcriptional regulator essential for normal development and functions of the small intestine and spleen. Activates directly MADCAM1 expression. Required for homing of lymphocytes in spleen and mucosa-associated lymphoid tissue. May have a role during pharyngeal organogenesis. In Mus musculus (Mouse), this protein is Homeobox protein Nkx-2.3 (Nkx2-3).